The chain runs to 259 residues: MDLGSKPLIGVVHLLPLPGSPGYRGSIEEILDRAISDAAKYQEAGFDAIILENYGDFPYSKTISKETLASFAVIAKEVGREISIPIGINVLRNDCVASYSIAYSVRADFIRVNVLTGVAFTDQGIIEGCARELAELRARLPSRIKVLADVHVKHATHFSSFEVALLDTVERGGADAVIITGSRTGSEVDIQELMLAKKISPVPVIVGSGLNPRNIRLFWRYADGFIVGTWVKEGGKTLNEVSLERATRIAKVVKSLRGE.

The protein belongs to the BtpA family.

This is an uncharacterized protein from Pyrococcus abyssi (strain GE5 / Orsay).